Here is a 548-residue protein sequence, read N- to C-terminus: Ankyrin repeat domain-containing protein SOWAHA (548 aa).

The N-terminal stretch at 1 to 19 (MALAAAAAAAAAAAGVSQA) is a signal peptide. A disordered region spans residues 114-212 (EDNCAPGAPH…PPTAQVPPQK (99 aa)). The segment covering 136 to 153 (SAPSELQHTPETLPSEVT) has biased composition (polar residues). A compositionally biased stretch (pro residues) spans 198–212 (GPEPAPPTAQVPPQK). Position 258 is a phosphoserine (Ser258). ANK repeat units follow at residues 344–373 (SGFTALHWAAKNGDREMALQLVEVARRGGA) and 383–413 (GGYTPLHLAALHGHEDAAVLLVVRLGAQVHV). The interval 512–548 (PRKKTKIRGGLPSFTEISHRSTPGPLAGLVPSLPPPT) is disordered.

It belongs to the SOWAH family.

This is Ankyrin repeat domain-containing protein SOWAHA (Sowaha) from Mus musculus (Mouse).